A 1159-amino-acid chain; its full sequence is WASH complex subunit 5 (1159 aa).

It belongs to the strumpellin family. In terms of assembly, component of the WASH core complex also described as WASH regulatory complex (SHRC) composed of WASH (WASHC1, WASH2P or WASH3P), WASHC2 (WASHC2A or WASHC2C), WASHC3, WASHC4 and WASHC5. The WASH core complex associates via WASHC2 with the F-actin-capping protein dimer (formed by CAPZA1, CAPZA2 or CAPZA3 and CAPZB) in a transient or substoichiometric manner which was initially described as WASH complex. Interacts with VCP, PI4K2A.

The protein resides in the cytoplasm. It is found in the cytosol. Its subcellular location is the endoplasmic reticulum. It localises to the early endosome. Functionally, acts as a component of the WASH core complex that functions as a nucleation-promoting factor (NPF) at the surface of endosomes, where it recruits and activates the Arp2/3 complex to induce actin polymerization, playing a key role in the fission of tubules that serve as transport intermediates during endosome sorting. May be involved in axonal outgrowth. Involved in cellular localization of ADRB2. Involved in cellular trafficking of BLOC-1 complex cargos such as ATP7A and VAMP7. Involved in cytokinesis and following polar body extrusion during oocyte meiotic maturation. The chain is WASH complex subunit 5 from Mus musculus (Mouse).